The sequence spans 142 residues: Large ribosomal subunit protein uL11 (142 aa).

Belongs to the universal ribosomal protein uL11 family. As to quaternary structure, part of the ribosomal stalk of the 50S ribosomal subunit. Interacts with L10 and the large rRNA to form the base of the stalk. L10 forms an elongated spine to which L12 dimers bind in a sequential fashion forming a multimeric L10(L12)X complex. Post-translationally, one or more lysine residues are methylated.

Forms part of the ribosomal stalk which helps the ribosome interact with GTP-bound translation factors. The chain is Large ribosomal subunit protein uL11 from Rhodopseudomonas palustris (strain BisB18).